Here is a 380-residue protein sequence, read N- to C-terminus: MSDRYYRPTFVNVNLDAISSNFKHIEKLHPNKTVIAVIKANGYGLGSVNIAKHLMTSGTDFFAVATLDEAIELRMHGIKAKILVLGVVDPKHIRQASRHRLALTAPDAKWVEDASRYIEAEDKPVWLHIKVDSGMGRIGVQTKQAYDMVVDKVAAVEQFIFEGVFTHFSSADEDNALTERAYDKFLGIINDNKPQYIHCQNSAATLRYDCSECNAVRLGISLYGYYPSEFIRAVSNVKLQPAVQLVSTACFIKHIKSGDTVSYGATYTAQSDEVVATFPIGYADGLPRAMQGYNINLEGTEVPIIGRVCMDQMMARVPDDTLLGAQCIIIDNNADSNQSLERVAQQLGTITYEVLTSLSRRLPKRYYIGDDIEVYNELMK.

Lys39 (proton acceptor; specific for D-alanine) is an active-site residue. N6-(pyridoxal phosphate)lysine is present on Lys39. Position 137 (Arg137) interacts with substrate. Tyr263 functions as the Proton acceptor; specific for L-alanine in the catalytic mechanism. Residue Met310 participates in substrate binding.

It belongs to the alanine racemase family. Requires pyridoxal 5'-phosphate as cofactor.

It catalyses the reaction L-alanine = D-alanine. The protein operates within amino-acid biosynthesis; D-alanine biosynthesis; D-alanine from L-alanine: step 1/1. Catalyzes the interconversion of L-alanine and D-alanine. May also act on other amino acids. The polypeptide is Alanine racemase (alr) (Macrococcus caseolyticus (strain JCSC5402) (Macrococcoides caseolyticum)).